A 494-amino-acid polypeptide reads, in one-letter code: Potassium voltage-gated channel subfamily A member 2 (494 aa).

Residues 1–25 (MTVATGDPSDEAAAHPGNPAEYDPD) form a disordered region. The interval 1–124 (MTVATGDPSD…YELGDEAIEL (124 aa)) is tetramerization domain. The Cytoplasmic segment spans residues 1–159 (MTVATGDPSD…LLFEYPESSG (159 aa)). A helical membrane pass occupies residues 160-181 (PARIIAIISVMVILISIVSFCL). At 182–216 (ETLPIFRNDDDEPHSVFDTNTNTTIYFTSTYFTDP) the chain is on the extracellular side. Asparagine 203 carries N-linked (GlcNAc...) asparagine glycosylation. A helical transmembrane segment spans residues 217-238 (FFILETLCIIWFSFEFLVRLFA). Cysteine 239 carries the S-palmitoyl cysteine lipid modification. Over 239-249 (CPSKSGFFGNV) the chain is Cytoplasmic. A helical membrane pass occupies residues 250–270 (MNIIDVVAIIPYFITLATELA). The Extracellular portion of the chain corresponds to 271 to 284 (EKPEDGQAGQQAMS). The helical; Voltage-sensor transmembrane segment at 285 to 305 (LAILRVIRLVRVFRIFKLSRH) threads the bilayer. Residues 306-320 (SKGLQILGQTLKASM) lie on the Cytoplasmic side of the membrane. The S4-S5 linker stretch occupies residues 307 to 320 (KGLQILGQTLKASM). Residues 321–342 (RELGLLIFFLFIGVILFSSAVY) traverse the membrane as a helical segment. Residues 343–356 (FAEADEPESQFESI) lie on the Extracellular side of the membrane. The segment at residues 357-368 (PDAFWWAVVSMT) is an intramembrane region (helical). The Selectivity filter motif lies at 369–374 (TVGYGD). The stretch at 369–376 (TVGYGDMV) is an intramembrane region. The Extracellular segment spans residues 377–383 (PTTIGGK). A helical membrane pass occupies residues 384–412 (IVGSLCAIAGVLTIALPVPVIVSNFNYFY). The Cytoplasmic portion of the chain corresponds to 413 to 494 (HRETEGEEQA…VNITKMLTDV (82 aa)). A PDZ-binding motif is present at residues 492-494 (TDV).

This sequence belongs to the potassium channel family. A (Shaker) (TC 1.A.1.2) subfamily. Kv1.2/KCNA2 sub-subfamily. Homotetramer and heterotetramer with other family members. In terms of tissue distribution, expressed in oligodendrocytes.

The protein resides in the cell membrane. The catalysed reaction is K(+)(in) = K(+)(out). In terms of biological role, voltage-gated potassium channel that mediates transmembrane potassium transport in excitable membranes, primarily in the brain and central nervous system. Prevents aberrant action potential firing and regulates neuronal output. Forms tetrameric potassium-selective channels through which potassium ions pass in accordance with their electrochemical gradient. The channel alternates between opened and closed conformations in response to the voltage difference across the membrane. Can form functional homotetrameric channels and heterotetrameric channels with other family members; the channels characteristics depend critically on the types of channel-forming alpha subunits that are present. Channel properties are modulated by cytoplasmic beta subunits that regulate the subcellular location of the alpha subunits. In vivo, membranes probably contain a mixture of heteromeric potassium channel complexes, making it difficult to assign currents observed in intact tissues to any particular potassium channel family member. Homotetrameric KCNA2 forms a delayed-rectifier potassium channel that opens in response to membrane depolarization, followed by slow spontaneous channel closure. Regulates neuronal excitability and plays a role as pacemaker in the regulation of neuronal action potentials. KCNA2-containing channels play a presynaptic role and prevent hyperexcitability and aberrant action potential firing. Response to toxins that are selective for KCNA2-containing potassium channels suggests that in Purkinje cells, dendritic subthreshold KCNA2-containing potassium channels prevent random spontaneous calcium spikes, suppressing dendritic hyperexcitability without hindering the generation of somatic action potentials, and thereby play an important role in motor coordination. Plays a role in the induction of long-term potentiation of neuron excitability in the CA3 layer of the hippocampus. This is Potassium voltage-gated channel subfamily A member 2 (kcna2) from Oncorhynchus mykiss (Rainbow trout).